Consider the following 329-residue polypeptide: Ketol-acid reductoisomerase (NADP(+)) (329 aa).

The 181-residue stretch at 1–181 (MKIYYDQDAD…GGTRGGVLTT (181 aa)) folds into the KARI N-terminal Rossmann domain. Residues 24–27 (YGSQ), arginine 47, and 82–85 (DQHQ) contribute to the NADP(+) site. Histidine 107 is a catalytic residue. Residue glycine 133 coordinates NADP(+). The 146-residue stretch at 182–327 (TFKEETETDL…AKLRGMMSWL (146 aa)) folds into the KARI C-terminal knotted domain. 4 residues coordinate Mg(2+): aspartate 190, glutamate 194, glutamate 226, and glutamate 230. Serine 251 contacts substrate.

Belongs to the ketol-acid reductoisomerase family. Mg(2+) is required as a cofactor.

It catalyses the reaction (2R)-2,3-dihydroxy-3-methylbutanoate + NADP(+) = (2S)-2-acetolactate + NADPH + H(+). The catalysed reaction is (2R,3R)-2,3-dihydroxy-3-methylpentanoate + NADP(+) = (S)-2-ethyl-2-hydroxy-3-oxobutanoate + NADPH + H(+). It participates in amino-acid biosynthesis; L-isoleucine biosynthesis; L-isoleucine from 2-oxobutanoate: step 2/4. The protein operates within amino-acid biosynthesis; L-valine biosynthesis; L-valine from pyruvate: step 2/4. Involved in the biosynthesis of branched-chain amino acids (BCAA). Catalyzes an alkyl-migration followed by a ketol-acid reduction of (S)-2-acetolactate (S2AL) to yield (R)-2,3-dihydroxy-isovalerate. In the isomerase reaction, S2AL is rearranged via a Mg-dependent methyl migration to produce 3-hydroxy-3-methyl-2-ketobutyrate (HMKB). In the reductase reaction, this 2-ketoacid undergoes a metal-dependent reduction by NADPH to yield (R)-2,3-dihydroxy-isovalerate. In Solidesulfovibrio magneticus (strain ATCC 700980 / DSM 13731 / RS-1) (Desulfovibrio magneticus), this protein is Ketol-acid reductoisomerase (NADP(+)).